The following is a 66-amino-acid chain: UPF0337 protein SpyM3_0896 (66 aa).

Belongs to the UPF0337 (CsbD) family.

This is UPF0337 protein SpyM3_0896 from Streptococcus pyogenes serotype M3 (strain ATCC BAA-595 / MGAS315).